We begin with the raw amino-acid sequence, 89 residues long: Large ribosomal subunit protein bL28 (89 aa).

This sequence belongs to the bacterial ribosomal protein bL28 family.

The chain is Large ribosomal subunit protein bL28 from Chlamydia muridarum (strain MoPn / Nigg).